Consider the following 230-residue polypeptide: Proteasome subunit beta 2 (230 aa).

Residues 1–10 show a composition bias toward basic and acidic residues; the sequence is MHDPENRLTD. The interval 1–29 is disordered; the sequence is MHDPENRLTDAYEPEVGNLPNEDSGRDEE. Positions 1-35 are cleaved as a propeptide — removed in mature form; by autocatalysis; sequence MHDPENRLTDAYEPEVGNLPNEDSGRDEENVVKTG. The active-site Nucleophile is the Thr36.

This sequence belongs to the peptidase T1B family. As to quaternary structure, the 20S proteasome core is composed of 14 alpha and 14 beta subunits that assemble into four stacked heptameric rings, resulting in a barrel-shaped structure. The two inner rings, each composed of seven catalytic beta subunits, are sandwiched by two outer rings, each composed of seven alpha subunits. The catalytic chamber with the active sites is on the inside of the barrel. Has a gated structure, the ends of the cylinder being occluded by the N-termini of the alpha-subunits. Is capped at one or both ends by the proteasome regulatory ATPase, PAN.

It is found in the cytoplasm. It carries out the reaction Cleavage of peptide bonds with very broad specificity.. The formation of the proteasomal ATPase PAN-20S proteasome complex, via the docking of the C-termini of PAN into the intersubunit pockets in the alpha-rings, triggers opening of the gate for substrate entry. Interconversion between the open-gate and close-gate conformations leads to a dynamic regulation of the 20S proteasome proteolysis activity. In terms of biological role, component of the proteasome core, a large protease complex with broad specificity involved in protein degradation. The chain is Proteasome subunit beta 2 from Haloarcula marismortui (strain ATCC 43049 / DSM 3752 / JCM 8966 / VKM B-1809) (Halobacterium marismortui).